A 292-amino-acid chain; its full sequence is Homoserine kinase (292 aa).

Residue Arg-81–Ala-91 coordinates ATP.

The protein belongs to the GHMP kinase family. Homoserine kinase subfamily.

It is found in the cytoplasm. It catalyses the reaction L-homoserine + ATP = O-phospho-L-homoserine + ADP + H(+). It participates in amino-acid biosynthesis; L-threonine biosynthesis; L-threonine from L-aspartate: step 4/5. Functionally, catalyzes the ATP-dependent phosphorylation of L-homoserine to L-homoserine phosphate. The chain is Homoserine kinase from Thermococcus kodakarensis (strain ATCC BAA-918 / JCM 12380 / KOD1) (Pyrococcus kodakaraensis (strain KOD1)).